The chain runs to 360 residues: Histidinol-phosphate aminotransferase (360 aa).

At lysine 219 the chain carries N6-(pyridoxal phosphate)lysine.

Belongs to the class-II pyridoxal-phosphate-dependent aminotransferase family. Histidinol-phosphate aminotransferase subfamily. In terms of assembly, homodimer. Pyridoxal 5'-phosphate serves as cofactor.

The catalysed reaction is L-histidinol phosphate + 2-oxoglutarate = 3-(imidazol-4-yl)-2-oxopropyl phosphate + L-glutamate. The protein operates within amino-acid biosynthesis; L-histidine biosynthesis; L-histidine from 5-phospho-alpha-D-ribose 1-diphosphate: step 7/9. The chain is Histidinol-phosphate aminotransferase from Jannaschia sp. (strain CCS1).